Reading from the N-terminus, the 393-residue chain is MRYDVVVVGSGVAGPIVARNVAKAGFSVLLVDKKPAIGAPKQCAEGLTINAFKQFDIPYDKRFINREIYGAKIYSPSGYTAELRYKEVSGVILERKVFDKMLAYYAAKAGAEVLARTEVVDVIRREGKIVGVKAKHEGEPMEIEAKVIVAADGVESTIARKAGIDTYAPPHEFDSGYEYEMIIEGFDPDLIHLFFGNEVAPRGYVWVFPKDEDRANVGIGINSDNEKTAKYYLDKWLKENNIPRNKILEVNVGLIPVGGFVKELVKENVLVVGDAARQVNPIHGGGMAEAMKASTIASKWIIKALEEENLELLKNYKEEWWKTEGPRMEKLLRLRRAMEKLTDEDLDVFVQLVSGTDLEKIAGGNYIEVVKALMKHPKVLMSRRRLEILKALL.

Alanine 13, aspartate 32, cysteine 43, alanine 44, glycine 46, arginine 95, valine 119, aspartate 274, and glycine 286 together coordinate FAD. A 2,3-bis-O-(geranylgeranyl)-sn-glycerol 1-phospholipid contacts are provided by arginine 327 and glycine 363.

Belongs to the geranylgeranyl reductase family. DGGGPL reductase subfamily. The cofactor is FAD.

It catalyses the reaction a 2,3-bis-O-phytanyl-sn-glycerol 1-phospholipid + 8 A = a 2,3-bis-O-(geranylgeranyl)-sn-glycerol 1-phospholipid + 8 AH2. The enzyme catalyses 2,3-bis-O-(phytanyl)-sn-glycerol 1-phosphate + 8 A = 2,3-bis-O-(geranylgeranyl)-sn-glycerol 1-phosphate + 8 AH2. It carries out the reaction CDP-2,3-bis-O-(geranylgeranyl)-sn-glycerol + 8 AH2 = CDP-2,3-bis-O-(phytanyl)-sn-glycerol + 8 A. The catalysed reaction is archaetidylserine + 8 AH2 = 2,3-bis-O-phytanyl-sn-glycero-3-phospho-L-serine + 8 A. Its pathway is membrane lipid metabolism; glycerophospholipid metabolism. Functionally, is involved in the reduction of 2,3-digeranylgeranylglycerophospholipids (unsaturated archaeols) into 2,3-diphytanylglycerophospholipids (saturated archaeols) in the biosynthesis of archaeal membrane lipids. Catalyzes the formation of archaetidic acid (2,3-di-O-phytanyl-sn-glyceryl phosphate) from 2,3-di-O-geranylgeranylglyceryl phosphate (DGGGP) via the hydrogenation of each double bond of the isoprenoid chains. Is also probably able to reduce double bonds of geranyl groups in CDP-2,3-bis-O-(geranylgeranyl)-sn-glycerol and archaetidylserine, thus acting at various stages in the biosynthesis of archaeal membrane lipids. This chain is Digeranylgeranylglycerophospholipid reductase, found in Pyrococcus horikoshii (strain ATCC 700860 / DSM 12428 / JCM 9974 / NBRC 100139 / OT-3).